Consider the following 77-residue polypeptide: MAAEKFETSLKKLEEVVRKLEGGSLSLDDSIKAFEEGVKHAAFCAKKLDEAERKVEVLIKQRDGSFRKEPFTTDNDD.

It belongs to the XseB family. Heterooligomer composed of large and small subunits.

The protein resides in the cytoplasm. It carries out the reaction Exonucleolytic cleavage in either 5'- to 3'- or 3'- to 5'-direction to yield nucleoside 5'-phosphates.. In terms of biological role, bidirectionally degrades single-stranded DNA into large acid-insoluble oligonucleotides, which are then degraded further into small acid-soluble oligonucleotides. In Trichlorobacter lovleyi (strain ATCC BAA-1151 / DSM 17278 / SZ) (Geobacter lovleyi), this protein is Exodeoxyribonuclease 7 small subunit.